A 161-amino-acid polypeptide reads, in one-letter code: MPSFDIVSEVDLQEVDNAVNQTVKEITTRYDFKGSKSTLTREDAVITILADDAYKLEQVTEVLKGKMVRRSVDPHFLDFGTVEPASGAMVRQNVTVKQGIESEFAKKIVKTIKNAKLKVQAAIQGDQVRVTGKKRDDLQEAIALLKSQSFEQPLQFNNFRD.

It belongs to the YajQ family.

Functionally, nucleotide-binding protein. The protein is Nucleotide-binding protein Mmc1_1670 of Magnetococcus marinus (strain ATCC BAA-1437 / JCM 17883 / MC-1).